The chain runs to 539 residues: CTP synthase (539 aa).

The tract at residues 1-272 is amidoligase domain; that stretch reads MTLRSKMTKY…AQIILSHFKI (272 aa). Ser19 contributes to the CTP binding site. Ser19 contributes to the UTP binding site. Residue 20-25 participates in ATP binding; the sequence is GLGKGV. An L-glutamine-binding site is contributed by Tyr60. ATP is bound at residue Asp77. The Mg(2+) site is built by Asp77 and Glu147. Residues 154-156, 193-198, and Lys229 contribute to the CTP site; these read DIE and KSKPTQ. Residues 193 to 198 and Lys229 each bind UTP; that span reads KSKPTQ. Positions 298-539 constitute a Glutamine amidotransferase type-1 domain; it reads KILMVGKYVE…SFLRVLIKNN (242 aa). Residue Gly360 participates in L-glutamine binding. Cys387 (nucleophile; for glutamine hydrolysis) is an active-site residue. Residues 388–391, Glu410, and Arg469 each bind L-glutamine; that span reads LGFQ. Catalysis depends on residues His514 and Glu516.

The protein belongs to the CTP synthase family. In terms of assembly, homotetramer.

It carries out the reaction UTP + L-glutamine + ATP + H2O = CTP + L-glutamate + ADP + phosphate + 2 H(+). It catalyses the reaction L-glutamine + H2O = L-glutamate + NH4(+). The enzyme catalyses UTP + NH4(+) + ATP = CTP + ADP + phosphate + 2 H(+). Its pathway is pyrimidine metabolism; CTP biosynthesis via de novo pathway; CTP from UDP: step 2/2. Allosterically activated by GTP, when glutamine is the substrate; GTP has no effect on the reaction when ammonia is the substrate. The allosteric effector GTP functions by stabilizing the protein conformation that binds the tetrahedral intermediate(s) formed during glutamine hydrolysis. Inhibited by the product CTP, via allosteric rather than competitive inhibition. Its function is as follows. Catalyzes the ATP-dependent amination of UTP to CTP with either L-glutamine or ammonia as the source of nitrogen. Regulates intracellular CTP levels through interactions with the four ribonucleotide triphosphates. The chain is CTP synthase from Mycoplasmopsis pulmonis (strain UAB CTIP) (Mycoplasma pulmonis).